Here is a 394-residue protein sequence, read N- to C-terminus: Cobalt-precorrin-5B C(1)-methyltransferase (394 aa).

The protein belongs to the CbiD family.

The catalysed reaction is Co-precorrin-5B + S-adenosyl-L-methionine = Co-precorrin-6A + S-adenosyl-L-homocysteine. Its pathway is cofactor biosynthesis; adenosylcobalamin biosynthesis; cob(II)yrinate a,c-diamide from sirohydrochlorin (anaerobic route): step 6/10. Catalyzes the methylation of C-1 in cobalt-precorrin-5B to form cobalt-precorrin-6A. In Clostridium beijerinckii (strain ATCC 51743 / NCIMB 8052) (Clostridium acetobutylicum), this protein is Cobalt-precorrin-5B C(1)-methyltransferase.